The chain runs to 160 residues: Deoxyuridine 5'-triphosphate nucleotidohydrolase (160 aa).

Positions 80, 93, 96, 99, 104, 149, 154, and 155 each coordinate dUMP.

Belongs to the dUTPase family. Homotrimer. Requires Mg(2+) as cofactor.

It carries out the reaction dUTP + H2O = dUMP + diphosphate + H(+). It functions in the pathway pyrimidine metabolism; dUMP biosynthesis; dUMP from dCTP (dUTP route): step 2/2. Involved in nucleotide metabolism via production of dUMP, the immediate precursor of thymidine nucleotides, and decreases the intracellular concentration of dUTP so that uracil cannot be incorporated into DNA. The chain is Deoxyuridine 5'-triphosphate nucleotidohydrolase (DUT1) from Debaryomyces hansenii (strain ATCC 36239 / CBS 767 / BCRC 21394 / JCM 1990 / NBRC 0083 / IGC 2968) (Yeast).